Reading from the N-terminus, the 528-residue chain is UDP-glucuronosyltransferase 2A1 (528 aa).

A signal peptide spans 1–21 (MLKNILLCSLQISLLGMSLGG). Topologically, residues 22–494 (NVLIWPMEGS…FQYHSLDVIG (473 aa)) are extracellular. A glycan (N-linked (GlcNAc...) asparagine) is linked at Asn49. Lys135 carries the post-translational modification N6-succinyllysine. Asn314 is a glycosylation site (N-linked (GlcNAc...) asparagine). A helical membrane pass occupies residues 495–515 (FLLACVASAILLVAKCCLFIF). The Cytoplasmic portion of the chain corresponds to 516–528 (QKVGKTGKKKKRD).

Belongs to the UDP-glycosyltransferase family.

Its subcellular location is the membrane. It catalyses the reaction glucuronate acceptor + UDP-alpha-D-glucuronate = acceptor beta-D-glucuronoside + UDP + H(+). The enzyme catalyses 16beta,17beta-estriol + UDP-alpha-D-glucuronate = 16beta,17beta-estriol 16-O-(beta-D-glucuronate) + UDP + H(+). The catalysed reaction is 16alpha,17alpha-estriol + UDP-alpha-D-glucuronate = 16alpha,17alpha-estriol 16-O-(beta-D-glucuronate) + UDP + H(+). It carries out the reaction 17alpha-estradiol + UDP-alpha-D-glucuronate = 17alpha-estradiol 17-O-(beta-D-glucuronate) + UDP + H(+). It catalyses the reaction 17alpha-estradiol + UDP-alpha-D-glucuronate = 17alpha-estradiol 3-O-(beta-D-glucuronate) + UDP + H(+). The enzyme catalyses 17beta-estradiol + UDP-alpha-D-glucuronate = 17beta-estradiol 3-O-(beta-D-glucuronate) + UDP + H(+). The catalysed reaction is 17beta-estradiol + UDP-alpha-D-glucuronate = 17beta-estradiol 17-O-(beta-D-glucuronate) + UDP + H(+). It carries out the reaction testosterone + UDP-alpha-D-glucuronate = testosterone 17-O-(beta-D-glucuronate) + UDP + H(+). It catalyses the reaction epitestosterone + UDP-alpha-D-glucuronate = epitestosterone 17-O-(beta-D-glucuronate) + UDP + H(+). The enzyme catalyses lithocholate + UDP-alpha-D-glucuronate = lithocholoyl-3-O-(beta-D-glucuronate) + UDP + H(+). The catalysed reaction is lithocholate + UDP-alpha-D-glucuronate = lithocholoyl-24-O-(beta-D-glucuronate) + UDP. It carries out the reaction deoxycholate + UDP-alpha-D-glucuronate = deoxycholoyl-24-O-(beta-D-glucuronate) + UDP. It catalyses the reaction hyodeoxycholate + UDP-alpha-D-glucuronate = hyodeoxycholate 6-O-(beta-D-glucuronate) + UDP + H(+). The enzyme catalyses hyocholate + UDP-alpha-D-glucuronate = hyocholoyl-24-O-(beta-D-glucuronate) + UDP. In terms of biological role, UDP-glucuronosyltransferase (UGT) that catalyzes phase II biotransformation reactions in which lipophilic substrates are conjugated with glucuronic acid to increase the metabolite's water solubility, thereby facilitating excretion into either the urine or bile. Essential for the elimination and detoxification of drugs, xenobiotics and endogenous compounds. Catalyzes the glucuronidation of endogenous steroid hormones such as androgens (testosterones) and estrogens (estradiol and estriol). Contributes to bile acid (BA) detoxification by catalyzing the glucuronidation of BA substrates, which are natural detergents for dietary lipids absorption. Shows a high affinity to aliphatic odorants such as citronellol as well as olfactory tissue specificity, and therefore may be involved in olfaction. This Mus musculus (Mouse) protein is UDP-glucuronosyltransferase 2A1.